A 190-amino-acid polypeptide reads, in one-letter code: Translation initiation factor IF-3 (190 aa).

The disordered stretch occupies residues 159–190 (QSEVQQKPKREGRNMIMFLSPRKSPLIKKDNE).

This sequence belongs to the IF-3 family. As to quaternary structure, monomer.

Its subcellular location is the cytoplasm. Its function is as follows. IF-3 binds to the 30S ribosomal subunit and shifts the equilibrium between 70S ribosomes and their 50S and 30S subunits in favor of the free subunits, thus enhancing the availability of 30S subunits on which protein synthesis initiation begins. This Prochlorococcus marinus (strain MIT 9215) protein is Translation initiation factor IF-3.